We begin with the raw amino-acid sequence, 212 residues long: MIGVIDYGMGNLFSVSKALERVGVPYVVSDRPEELEKADAFILPGVGSFSDAMDNLRRAKLDQFIHRMVDEGKLLLGICLGMQLIFEESTENGSAKGLGLLAGKAVRLKDRDAEGNKLKVPHMGWNRLTFHQTSPLLSEAEEGFVYFVHSYYIDGMEDGDLLASAEYGVRVPAVVGKRNVFGAQFHPEKSGTAGMAILTQFTKMAAEQQVKK.

A Glutamine amidotransferase type-1 domain is found at 1–211 (MIGVIDYGMG…TKMAAEQQVK (211 aa)). The active-site Nucleophile is the cysteine 79. Active-site residues include histidine 186 and glutamate 188.

As to quaternary structure, heterodimer of HisH and HisF.

It is found in the cytoplasm. The catalysed reaction is 5-[(5-phospho-1-deoxy-D-ribulos-1-ylimino)methylamino]-1-(5-phospho-beta-D-ribosyl)imidazole-4-carboxamide + L-glutamine = D-erythro-1-(imidazol-4-yl)glycerol 3-phosphate + 5-amino-1-(5-phospho-beta-D-ribosyl)imidazole-4-carboxamide + L-glutamate + H(+). It carries out the reaction L-glutamine + H2O = L-glutamate + NH4(+). The protein operates within amino-acid biosynthesis; L-histidine biosynthesis; L-histidine from 5-phospho-alpha-D-ribose 1-diphosphate: step 5/9. In terms of biological role, IGPS catalyzes the conversion of PRFAR and glutamine to IGP, AICAR and glutamate. The HisH subunit catalyzes the hydrolysis of glutamine to glutamate and ammonia as part of the synthesis of IGP and AICAR. The resulting ammonia molecule is channeled to the active site of HisF. This chain is Imidazole glycerol phosphate synthase subunit HisH, found in Bacillus velezensis (strain DSM 23117 / BGSC 10A6 / LMG 26770 / FZB42) (Bacillus amyloliquefaciens subsp. plantarum).